A 257-amino-acid chain; its full sequence is Meiotically up-regulated gene 14 protein (257 aa).

It localises to the cytoplasm. The protein resides in the nucleus. Its function is as follows. Has a role in meiosis. The protein is Meiotically up-regulated gene 14 protein (mug14) of Schizosaccharomyces pombe (strain 972 / ATCC 24843) (Fission yeast).